The primary structure comprises 505 residues: Aspartyl/glutamyl-tRNA(Asn/Gln) amidotransferase subunit B (505 aa).

It belongs to the GatB/GatE family. GatB subfamily. In terms of assembly, heterotrimer of A, B and C subunits.

It carries out the reaction L-glutamyl-tRNA(Gln) + L-glutamine + ATP + H2O = L-glutaminyl-tRNA(Gln) + L-glutamate + ADP + phosphate + H(+). It catalyses the reaction L-aspartyl-tRNA(Asn) + L-glutamine + ATP + H2O = L-asparaginyl-tRNA(Asn) + L-glutamate + ADP + phosphate + 2 H(+). Functionally, allows the formation of correctly charged Asn-tRNA(Asn) or Gln-tRNA(Gln) through the transamidation of misacylated Asp-tRNA(Asn) or Glu-tRNA(Gln) in organisms which lack either or both of asparaginyl-tRNA or glutaminyl-tRNA synthetases. The reaction takes place in the presence of glutamine and ATP through an activated phospho-Asp-tRNA(Asn) or phospho-Glu-tRNA(Gln). The protein is Aspartyl/glutamyl-tRNA(Asn/Gln) amidotransferase subunit B of Kineococcus radiotolerans (strain ATCC BAA-149 / DSM 14245 / SRS30216).